Here is a 328-residue protein sequence, read N- to C-terminus: Galactinol synthase 10 (328 aa).

Lys-106 is an active-site residue. Positions 122, 124, and 248 each coordinate Mn(2+).

Belongs to the glycosyltransferase 8 family. Galactosyltransferase subfamily. The cofactor is a divalent metal cation.

It localises to the cytoplasm. The catalysed reaction is myo-inositol + UDP-alpha-D-galactose = alpha-D-galactosyl-(1-&gt;3)-1D-myo-inositol + UDP + H(+). In terms of biological role, galactinol synthase involved in the biosynthesis of raffinose family oligosaccharides (RFOs) that function as osmoprotectants. May promote plant stress tolerance. The polypeptide is Galactinol synthase 10 (GOLS10) (Arabidopsis thaliana (Mouse-ear cress)).